The following is a 1050-amino-acid chain: TSC22 domain family protein 1 (1050 aa).

Residues Met-1–Leu-99 form a required for interaction with TGFBR1 and promotion of TGF-beta signaling region. Disordered regions lie at residues Met-22–Gly-111, Ile-126–Ala-285, Gln-445–Ser-479, Asp-511–Gln-531, Leu-581–Tyr-609, Val-720–Ser-740, Gln-795–Val-847, and Ser-879–Gly-919. Low complexity predominate over residues Ala-38–Ser-55. Residues Phe-58–Ala-71 are compositionally biased toward pro residues. Residues Ser-85 to Gln-97 are compositionally biased toward low complexity. The span at Glu-134–Asp-143 shows a compositional bias: acidic residues. Residues His-217 to Ser-241 show a composition bias toward basic residues. Ser-265 carries the phosphoserine modification. A compositionally biased stretch (low complexity) spans Thr-458 to Ser-476. The span at Leu-586–Pro-603 shows a compositional bias: pro residues. Positions Leu-906–Gly-919 are enriched in low complexity. The tract at residues Leu-983–Leu-1004 is leucine-zipper. The interval Gln-1015–Ala-1050 is disordered. Over residues Gln-1021 to Ala-1050 the composition is skewed to low complexity.

Belongs to the TSC-22/Dip/Bun family. As to quaternary structure, forms homodimers. Forms heterodimers. Component of a complex composed of TSC22D1 (via N-terminus), TGFBR1 and TGFBR2; the interaction between TSC22D1 and TGFBR1 is inhibited by SMAD7 and promoted by TGFB1. Interacts with SMAD7; the interaction requires TGF-beta and the interaction is inhibited by TGFBR1. Interacts with TPT1/fortilin; interaction results in the destabilization of TSC22D1 protein and prevents TSC22D1-mediated apoptosis. Interacts with SMAD4 (via N-terminus). Interacts with ACVRL1/ALK1, ACVR1/ALK2, BMPR1A/ALK3, ACVR1B/ALK4, BMPR1B/ALK6, ACVR2A/ACTRII, and BMPR2. Interacts with SMAD6. Interacts with TFE3; the interaction is enhanced in the presence of TGF-beta. Forms a heterodimer with TSC22D4/THG1. In terms of assembly, forms a heterodimer with TSC22D4/THG1. Interacts with histone H1-2. Interacts with GNL3. In terms of tissue distribution, ubiquitously expressed, abundantly expressed in testis, ovary, uterus, and lung. Expressed in cardiomyocytes.

Its subcellular location is the cytoplasm. The protein localises to the nucleus. The protein resides in the cell membrane. It localises to the mitochondrion. Functionally, transcriptional repressor. Acts on the C-type natriuretic peptide (CNP) promoter. Acts to promote CASP3-mediated apoptosis. Positively regulates TGF-beta signaling by interacting with SMAD7 which inhibits binding of SMAD7 to TGFBR1, preventing recruitment of SMURF ubiquitin ligases to TGFBR1 and inhibiting SMURF-mediated ubiquitination and degradation of TGFBR1. Contributes to enhancement of TGF-beta signaling by binding to and modulating the transcription activator activity of SMAD4. Promotes TGF-beta-induced transcription of COL1A2; via its interaction with TFE3 at E-boxes in the gene proximal promoter. Plays a role in the repression of hematopoietic precursor cell growth. Promotes IL2 deprivation-induced apoptosis in T-lymphocytes, via repression of TSC22D3/GILZ transcription and activation of the caspase cascade. Its function is as follows. May act to negatively regulate TGFB3 signaling and thereby inhibit cell death in mammary gland cells. In terms of biological role, positively regulates cell death in response to TGFB3 during mammary gland involution. The protein is TSC22 domain family protein 1 of Rattus norvegicus (Rat).